A 92-amino-acid polypeptide reads, in one-letter code: Endoribonuclease VapD homolog (92 aa).

Belongs to the VapD ribonuclease family. As to quaternary structure, homodimer.

Cleaves ssRNA, mostly between U:A. In Neisseria gonorrhoeae, this protein is Endoribonuclease VapD homolog.